The sequence spans 395 residues: uncharacterized protein (395 aa).

Over residues 286–306 (SSNKSSESTMTSPLDSASSLH) the composition is skewed to low complexity. The disordered stretch occupies residues 286-395 (SSNKSSESTM…RNDDSGLESV (110 aa)). Residues 350–362 (RPPPPSVHPPIFP) show a composition bias toward pro residues. Over residues 364–385 (QTQLFHPPTYSTQRHVTSPNSS) the composition is skewed to polar residues.

This is an uncharacterized protein from Caenorhabditis elegans.